We begin with the raw amino-acid sequence, 89 residues long: Exodeoxyribonuclease 7 small subunit (89 aa).

Residues 1–23 (MRPWRCVSMAKAPAAPSSTQPDP) are disordered.

It belongs to the XseB family. Heterooligomer composed of large and small subunits.

The protein localises to the cytoplasm. It catalyses the reaction Exonucleolytic cleavage in either 5'- to 3'- or 3'- to 5'-direction to yield nucleoside 5'-phosphates.. Its function is as follows. Bidirectionally degrades single-stranded DNA into large acid-insoluble oligonucleotides, which are then degraded further into small acid-soluble oligonucleotides. In Acidovorax sp. (strain JS42), this protein is Exodeoxyribonuclease 7 small subunit.